A 345-amino-acid chain; its full sequence is Succinylglutamate desuccinylase (345 aa).

His64, Glu67, and His161 together coordinate Zn(2+). Glu225 is a catalytic residue.

Belongs to the AspA/AstE family. Succinylglutamate desuccinylase subfamily. Zn(2+) serves as cofactor.

It catalyses the reaction N-succinyl-L-glutamate + H2O = L-glutamate + succinate. It functions in the pathway amino-acid degradation; L-arginine degradation via AST pathway; L-glutamate and succinate from L-arginine: step 5/5. Its function is as follows. Transforms N(2)-succinylglutamate into succinate and glutamate. The polypeptide is Succinylglutamate desuccinylase (Shewanella piezotolerans (strain WP3 / JCM 13877)).